Consider the following 445-residue polypeptide: Ubiquitin carboxyl-terminal hydrolase 11 (445 aa).

In terms of domain architecture, USP spans 1-412; sequence NSARADLCVA…AAYVLFYQRQ (412 aa). A disordered region spans residues 127–194; it reads RPSSDDEDDG…GPSHWPQRAR (68 aa). Ser-130 is modified (phosphoserine). Residues 131 to 140 show a composition bias toward acidic residues; that stretch reads DDEDDGDEKD. The Nucleophile role is filled by His-362. His-370 serves as the catalytic Proton acceptor. The tract at residues 416–445 is disordered; it reads RRLQPQPSSSDPPASPACGSPPNSEFMDVN. Over residues 420–439 the composition is skewed to low complexity; it reads PQPSSSDPPASPACGSPPNS. Ser-430 carries the post-translational modification Phosphoserine.

Belongs to the peptidase C19 family. In terms of assembly, monomer. Interacts with RANBP9/RANBPM. Interacts with BRCA2. Interacts with CHUK/IKKA. Interacts with NFKBIA. Associated component of the Polycomb group (PcG) multiprotein PRC1-like complex.

The protein resides in the nucleus. Its subcellular location is the cytoplasm. The protein localises to the chromosome. The enzyme catalyses Thiol-dependent hydrolysis of ester, thioester, amide, peptide and isopeptide bonds formed by the C-terminal Gly of ubiquitin (a 76-residue protein attached to proteins as an intracellular targeting signal).. In terms of biological role, protease that can remove conjugated ubiquitin from target proteins and polyubiquitin chains. Inhibits the degradation of target proteins by the proteasome. Cleaves preferentially 'Lys-6' and 'Lys-63'-linked ubiquitin chains. Has lower activity with 'Lys-11' and 'Lys-33'-linked ubiquitin chains, and extremely low activity with 'Lys-27', 'Lys-29' and 'Lys-48'-linked ubiquitin chains (in vitro). Plays a role in the regulation of pathways leading to NF-kappa-B activation. Plays a role in the regulation of DNA repair after double-stranded DNA breaks. Acts as a chromatin regulator via its association with the Polycomb group (PcG) multiprotein PRC1-like complex; may act by deubiquitinating components of the PRC1-like complex. Promotes cell proliferation by deubiquitinating phosphorylated E2F1. The protein is Ubiquitin carboxyl-terminal hydrolase 11 (USP11) of Canis lupus familiaris (Dog).